We begin with the raw amino-acid sequence, 246 residues long: ATP synthase subunit a (246 aa).

Positions M1–Y3 are cleaved as a propeptide — removed in mature form. Transmembrane regions (helical) follow at residues V25–L45, L51–V71, G79–V99, L112–S132, F138–I158, V178–S198, and F203–I223.

It belongs to the ATPase A chain family. F-type ATPases have 2 components, CF(1) - the catalytic core - and CF(0) - the membrane proton channel. CF(1) has five subunits: alpha(3), beta(3), gamma(1), delta(1), epsilon(1). CF(0) has three main subunits: a, b and c.

It is found in the mitochondrion inner membrane. In terms of biological role, mitochondrial membrane ATP synthase (F(1)F(0) ATP synthase or Complex V) produces ATP from ADP in the presence of a proton gradient across the membrane which is generated by electron transport complexes of the respiratory chain. F-type ATPases consist of two structural domains, F(1) - containing the extramembraneous catalytic core and F(0) - containing the membrane proton channel, linked together by a central stalk and a peripheral stalk. During catalysis, ATP synthesis in the catalytic domain of F(1) is coupled via a rotary mechanism of the central stalk subunits to proton translocation. Key component of the proton channel; it may play a direct role in the translocation of protons across the membrane. In Debaryomyces hansenii (strain ATCC 36239 / CBS 767 / BCRC 21394 / JCM 1990 / NBRC 0083 / IGC 2968) (Yeast), this protein is ATP synthase subunit a (ATP6).